The following is a 428-amino-acid chain: Flotillin-2 (428 aa).

Gly-2 carries N-myristoyl glycine lipidation. Cys-4 carries the S-palmitoyl cysteine; by ZDHHC5 lipid modification. Cys-19 carries the S-palmitoyl cysteine lipid modification. Residue Cys-20 is the site of S-palmitoyl cysteine; by ZDHHC5 attachment. Ser-405 is subject to Phosphoserine.

Belongs to the band 7/mec-2 family. Flotillin subfamily. As to quaternary structure, heterooligomeric complex of flotillin-1 and flotillin-2 and caveolin-1 and caveolin-2. Interacts with ECPAS. In terms of processing, ZDHHC5-catalyzed palmitoylation may be required for the formation of higher-order complexes and for neurite outgrowth in cultured neural stem cells.

The protein localises to the cell membrane. The protein resides in the membrane. It is found in the caveola. Its subcellular location is the endosome. Functionally, may act as a scaffolding protein within caveolar membranes, functionally participating in formation of caveolae or caveolae-like vesicles. May be involved in epidermal cell adhesion and epidermal structure and function. This chain is Flotillin-2 (FLOT2), found in Bos taurus (Bovine).